The sequence spans 340 residues: tRNA-cytidine(32) 2-sulfurtransferase (340 aa).

The short motif at 74–79 (SGGKDS) is the PP-loop motif element. [4Fe-4S] cluster is bound by residues cysteine 149, cysteine 152, and cysteine 240.

It belongs to the TtcA family. Homodimer. It depends on Mg(2+) as a cofactor. The cofactor is [4Fe-4S] cluster.

The protein localises to the cytoplasm. It catalyses the reaction cytidine(32) in tRNA + S-sulfanyl-L-cysteinyl-[cysteine desulfurase] + AH2 + ATP = 2-thiocytidine(32) in tRNA + L-cysteinyl-[cysteine desulfurase] + A + AMP + diphosphate + H(+). It participates in tRNA modification. Its function is as follows. Catalyzes the ATP-dependent 2-thiolation of cytidine in position 32 of tRNA, to form 2-thiocytidine (s(2)C32). The sulfur atoms are provided by the cysteine/cysteine desulfurase (IscS) system. The sequence is that of tRNA-cytidine(32) 2-sulfurtransferase from Burkholderia ambifaria (strain MC40-6).